A 144-amino-acid polypeptide reads, in one-letter code: Transcriptional regulator MraZ (144 aa).

2 SpoVT-AbrB domains span residues 5–47 (TYTP…PRAE) and 77–120 (TDEQ…DAQA).

The protein belongs to the MraZ family. In terms of assembly, forms oligomers.

It is found in the cytoplasm. It localises to the nucleoid. The sequence is that of Transcriptional regulator MraZ from Mycolicibacterium vanbaalenii (strain DSM 7251 / JCM 13017 / BCRC 16820 / KCTC 9966 / NRRL B-24157 / PYR-1) (Mycobacterium vanbaalenii).